We begin with the raw amino-acid sequence, 434 residues long: Methylenetetrahydrofolate--tRNA-(uracil-5-)-methyltransferase TrmFO (434 aa).

9 to 14 is a binding site for FAD; the sequence is GAGLAG.

This sequence belongs to the MnmG family. TrmFO subfamily. The cofactor is FAD.

The protein localises to the cytoplasm. It catalyses the reaction uridine(54) in tRNA + (6R)-5,10-methylene-5,6,7,8-tetrahydrofolate + NADH + H(+) = 5-methyluridine(54) in tRNA + (6S)-5,6,7,8-tetrahydrofolate + NAD(+). It carries out the reaction uridine(54) in tRNA + (6R)-5,10-methylene-5,6,7,8-tetrahydrofolate + NADPH + H(+) = 5-methyluridine(54) in tRNA + (6S)-5,6,7,8-tetrahydrofolate + NADP(+). Catalyzes the folate-dependent formation of 5-methyl-uridine at position 54 (M-5-U54) in all tRNAs. This chain is Methylenetetrahydrofolate--tRNA-(uracil-5-)-methyltransferase TrmFO, found in Listeria innocua serovar 6a (strain ATCC BAA-680 / CLIP 11262).